The sequence spans 208 residues: Uridine kinase (208 aa).

Residue 12–19 participates in ATP binding; the sequence is GGSGGGKT.

It belongs to the uridine kinase family.

The protein localises to the cytoplasm. The catalysed reaction is uridine + ATP = UMP + ADP + H(+). It carries out the reaction cytidine + ATP = CMP + ADP + H(+). It functions in the pathway pyrimidine metabolism; CTP biosynthesis via salvage pathway; CTP from cytidine: step 1/3. The protein operates within pyrimidine metabolism; UMP biosynthesis via salvage pathway; UMP from uridine: step 1/1. This Streptococcus pyogenes serotype M18 (strain MGAS8232) protein is Uridine kinase.